The chain runs to 317 residues: uncharacterized protein (317 aa).

The Cytoplasmic segment spans residues 1–13; sequence MKRVTGVFLTLLR. A helical transmembrane segment spans residues 14–34; it reads FSQFASSVLVMSLLAYAIHAY. The Extracellular segment spans residues 35-49; it reads GNRGNKKTNFTLATG. N-linked (GlcNAc...) asparagine glycosylation is present at Asn-43. A helical transmembrane segment spans residues 50 to 70; the sequence is VISVFYLIALGILCLALPTLI. Position 71 (Tyr-71) is a topological domain, cytoplasmic. Residues 72–92 traverse the membrane as a helical segment; sequence IGMYFCAELIVCMLWLAAFVV. Over 93–133 the chain is Extracellular; it reads LAKAQGERSCSNTNADGLYYNPYSGQYTADSHRRACNSSQA. Asn-129 carries N-linked (GlcNAc...) asparagine glycosylation. The helical transmembrane segment at 134 to 154 threads the bilayer; it reads AIAFSGLCFVLFLISVILLGI. The Cytoplasmic segment spans residues 155-317; the sequence is NVLTPIRKRY…EPNRNVNQMP (163 aa). The segment at 204–317 is disordered; sequence RTGDVEAGAG…EPNRNVNQMP (114 aa). Residues 239 to 250 are compositionally biased toward low complexity; the sequence is TTTTNTRYTTTT. The span at 256-282 shows a compositional bias: polar residues; that stretch reads RYTTNDRNPGSANVANSAVDQHAYSTD. Basic and acidic residues predominate over residues 284–295; that stretch reads SGDRSYQEKVTE. A compositionally biased stretch (polar residues) spans 302-317; the sequence is MSGSTAEPNRNVNQMP.

It localises to the membrane. This is an uncharacterized protein from Saccharomyces cerevisiae (strain ATCC 204508 / S288c) (Baker's yeast).